A 361-amino-acid polypeptide reads, in one-letter code: Salt tolerance receptor-like cytoplasmic kinase 1 (361 aa).

Residues cysteine 5, cysteine 10, and cysteine 14 are each lipidated (S-palmitoyl cysteine). Positions glycine 67–leucine 347 constitute a Protein kinase domain. ATP is bound by residues isoleucine 73–valine 81 and lysine 95. Aspartate 195 (proton acceptor) is an active-site residue.

It belongs to the protein kinase superfamily. Ser/Thr protein kinase family. As to quaternary structure, self-interacts. Interacts with CATA, CATB and CATC at the plasma membrane. Palmitoylated. Palmotylation at Cys-5, Cys-10 and Cys-14 by DHHC9 is required for plasma membrane targeting and STRK1 function. In terms of processing, autophosphorylated. As to expression, accumulates in seeds. Mainly expressed in young roots, and, to a lower extent, in leaf veins, seedlings, stems, leaf sheath and young spikelet.

The protein localises to the cell membrane. The enzyme catalyses L-seryl-[protein] + ATP = O-phospho-L-seryl-[protein] + ADP + H(+). The catalysed reaction is L-threonyl-[protein] + ATP = O-phospho-L-threonyl-[protein] + ADP + H(+). It carries out the reaction L-tyrosyl-[protein] + ATP = O-phospho-L-tyrosyl-[protein] + ADP + H(+). Functionally, acts probably as a dual specificity protein kinase. Regulates hydrogen peroxide (H(2)O(2)) homeostasis and improves salt tolerance by phosphorylating tyrosine residues of CATC thus activating its catalase activity. Promotes growth at the seedling stage and prevents grain yield loss under salt stress conditions. The sequence is that of Salt tolerance receptor-like cytoplasmic kinase 1 from Oryza sativa subsp. japonica (Rice).